A 173-amino-acid polypeptide reads, in one-letter code: Small ribosomal subunit protein uS4c (173 aa).

Residues 94-155 (SRLDSKIYRS…TKLTSELIEK (62 aa)) form the S4 RNA-binding domain.

Belongs to the universal ribosomal protein uS4 family. As to quaternary structure, part of the 30S ribosomal subunit. Contacts protein S5. The interaction surface between S4 and S5 is involved in control of translational fidelity.

The protein localises to the plastid. Functionally, one of the primary rRNA binding proteins, it binds directly to 16S rRNA where it nucleates assembly of the body of the 30S subunit. With S5 and S12 plays an important role in translational accuracy. The polypeptide is Small ribosomal subunit protein uS4c (rps4) (Helicosporidium sp. subsp. Simulium jonesii (Green alga)).